A 767-amino-acid chain; its full sequence is Cap-specific mRNA (nucleoside-2'-O-)-methyltransferase 2 (767 aa).

The Adrift-type SAM-dependent 2'-O-MTase domain maps to E109–G322. Residue K117 is part of the active site. S-adenosyl-L-methionine-binding residues include G148, W167, and D235. The active site involves D235. The Proton acceptor role is filled by K275.

Its subcellular location is the nucleus. It localises to the cytoplasm. The catalysed reaction is a 5'-end (N(7)-methyl 5'-triphosphoguanosine)-(2'-O-methyl-ribonucleoside)-(ribonucleotide) in mRNA + S-adenosyl-L-methionine = a 5'-end (N(7)-methyl 5'-triphosphoguanosine)-(2'-O-methyl-ribonucleoside)-(2'-O-methyl-ribonucleotide) in mRNA + S-adenosyl-L-homocysteine + H(+). S-adenosyl-L-methionine-dependent methyltransferase that mediates mRNA cap2 2'-O-ribose methylation to the 5'-cap structure of mRNAs. Methylates the ribose of the second nucleotide of a m(7)GpppG-capped mRNA and small nuclear RNA (snRNA) (cap0) to produce m(7)GpppRmpNm (cap2). Recognizes a guanosine cap on RNA independently of its N(7) methylation status. Display cap2 methylation on both cap0 and cap1. Displays a preference for cap1 RNAs. The polypeptide is Cap-specific mRNA (nucleoside-2'-O-)-methyltransferase 2 (Cmtr2) (Mus musculus (Mouse)).